We begin with the raw amino-acid sequence, 276 residues long: Omega-amidase NIT2-B (276 aa).

Positions 4–248 (FRLSLVQFLV…ETVISADIDL (245 aa)) constitute a CN hydrolase domain. Residue E43 is the Proton acceptor of the active site. The active-site Proton donor is K112. C153 serves as the catalytic Nucleophile.

This sequence belongs to the carbon-nitrogen hydrolase superfamily. NIT1/NIT2 family. Homodimer.

The protein localises to the cytoplasm. The catalysed reaction is 2-oxoglutaramate + H2O = 2-oxoglutarate + NH4(+). It catalyses the reaction 2-oxosuccinamate + H2O = oxaloacetate + NH4(+). Its function is as follows. Has omega-amidase activity. The role of omega-amidase is to remove potentially toxic intermediates by converting 2-oxoglutaramate and 2-oxosuccinamate to biologically useful 2-oxoglutarate and oxaloacetate, respectively. This chain is Omega-amidase NIT2-B (nit2b), found in Xenopus laevis (African clawed frog).